Reading from the N-terminus, the 80-residue chain is Exodeoxyribonuclease 7 small subunit (80 aa).

It belongs to the XseB family. In terms of assembly, heterooligomer composed of large and small subunits.

The protein resides in the cytoplasm. It carries out the reaction Exonucleolytic cleavage in either 5'- to 3'- or 3'- to 5'-direction to yield nucleoside 5'-phosphates.. Functionally, bidirectionally degrades single-stranded DNA into large acid-insoluble oligonucleotides, which are then degraded further into small acid-soluble oligonucleotides. The polypeptide is Exodeoxyribonuclease 7 small subunit (Vibrio campbellii (strain ATCC BAA-1116)).